The following is a 153-amino-acid chain: UPF0178 protein CC_1215 (153 aa).

This sequence belongs to the UPF0178 family.

In Caulobacter vibrioides (strain ATCC 19089 / CIP 103742 / CB 15) (Caulobacter crescentus), this protein is UPF0178 protein CC_1215.